Consider the following 423-residue polypeptide: D-tagatose-1,6-bisphosphate aldolase subunit GatZ (423 aa).

Belongs to the GatZ/KbaZ family. GatZ subfamily. In terms of assembly, forms a complex with GatY.

It participates in carbohydrate metabolism; D-tagatose 6-phosphate degradation; D-glyceraldehyde 3-phosphate and glycerone phosphate from D-tagatose 6-phosphate: step 2/2. In terms of biological role, component of the tagatose-1,6-bisphosphate aldolase GatYZ that is required for full activity and stability of the Y subunit. Could have a chaperone-like function for the proper and stable folding of GatY. When expressed alone, GatZ does not show any aldolase activity. Is involved in the catabolism of galactitol. This chain is D-tagatose-1,6-bisphosphate aldolase subunit GatZ, found in Salmonella typhimurium (strain LT2 / SGSC1412 / ATCC 700720).